We begin with the raw amino-acid sequence, 490 residues long: Glycogen synthase kinase-3 alpha (490 aa).

Gly residues predominate over residues 1–15; sequence MSGGGPSGGGPGGSG. The interval 1 to 97 is disordered; that stretch reads MSGGGPSGGG…PPGVKLGRDS (97 aa). Position 2 is an N-acetylserine (S2). S2 is subject to Phosphoserine. Phosphoserine; by PKB/AKT1 is present on S21. Positions 25 to 82 are enriched in gly residues; it reads PGGGGGGGGGGPGGSASGPGGTGGGKASVGAMGGGVGASSSGGGPSGSGGGGSGGPGA. Phosphoserine occurs at positions 72, 77, and 97. A Protein kinase domain is found at 119–404; the sequence is YTDIKVIGNG…PLEACAHSFF (286 aa). ATP-binding positions include 125 to 133 and K148; that span reads IGNGSFGVV. D244 acts as the Proton acceptor in catalysis. Position 279 is a phosphotyrosine (Y279). Residues 451 to 490 form a disordered region; that stretch reads GPASPLTTSYNPSSQALTEAQTGQDWQPSDATTATLASSS. The segment covering 455–480 has biased composition (polar residues); sequence PLTTSYNPSSQALTEAQTGQDWQPSD. Residues 481–490 are compositionally biased toward low complexity; it reads ATTATLASSS.

It belongs to the protein kinase superfamily. CMGC Ser/Thr protein kinase family. GSK-3 subfamily. As to quaternary structure, monomer. Interacts with AXIN1 and CTNNB1/beta-catenin. Interacts with ARRB2. Interacts with CTNND2. Interacts with LMBR1L. Interacts with DDX3X. Interacts with TNFRSF10B. In terms of processing, phosphorylated by AKT1 at Ser-21: upon insulin-mediated signaling, the activated PKB/AKT1 protein kinase phosphorylates and deactivates GSK3A, resulting in the dephosphorylation and activation of GYS1. Activated by phosphorylation at Tyr-279.

It catalyses the reaction L-seryl-[tau protein] + ATP = O-phospho-L-seryl-[tau protein] + ADP + H(+). It carries out the reaction L-threonyl-[tau protein] + ATP = O-phospho-L-threonyl-[tau protein] + ADP + H(+). The enzyme catalyses L-seryl-[protein] + ATP = O-phospho-L-seryl-[protein] + ADP + H(+). The catalysed reaction is L-threonyl-[protein] + ATP = O-phospho-L-threonyl-[protein] + ADP + H(+). With respect to regulation, activated by phosphorylation at Tyr-279. In response to insulin, inhibited by phosphorylation at Ser-21 by PKB/AKT1; phosphorylation at this site causes a conformational change, preventing access of substrates to the active site. Inhibited by lithium. Functionally, constitutively active protein kinase that acts as a negative regulator in the hormonal control of glucose homeostasis, Wnt signaling and regulation of transcription factors and microtubules, by phosphorylating and inactivating glycogen synthase (GYS1 or GYS2), CTNNB1/beta-catenin, APC and AXIN1. Requires primed phosphorylation of the majority of its substrates. Contributes to insulin regulation of glycogen synthesis by phosphorylating and inhibiting GYS1 activity and hence glycogen synthesis. Regulates glycogen metabolism in liver, but not in muscle. May also mediate the development of insulin resistance by regulating activation of transcription factors. In Wnt signaling, regulates the level and transcriptional activity of nuclear CTNNB1/beta-catenin. Facilitates amyloid precursor protein (APP) processing and the generation of APP-derived amyloid plaques found in Alzheimer disease. May be involved in the regulation of replication in pancreatic beta-cells. Is necessary for the establishment of neuronal polarity and axon outgrowth. Through phosphorylation of the anti-apoptotic protein MCL1, may control cell apoptosis in response to growth factors deprivation. Acts as a regulator of autophagy by mediating phosphorylation of KAT5/TIP60 under starvation conditions, activating KAT5/TIP60 acetyltransferase activity and promoting acetylation of key autophagy regulators, such as ULK1 and RUBCNL/Pacer. Negatively regulates extrinsic apoptotic signaling pathway via death domain receptors. Promotes the formation of an anti-apoptotic complex, made of DDX3X, BRIC2 and GSK3B, at death receptors, including TNFRSF10B. The anti-apoptotic function is most effective with weak apoptotic signals and can be overcome by stronger stimulation. The polypeptide is Glycogen synthase kinase-3 alpha (Gsk3a) (Mus musculus (Mouse)).